Here is a 206-residue protein sequence, read N- to C-terminus: Triafestin-2 (206 aa).

A signal peptide spans 1-18 (MKTILAVIFFGILAFAFA). Asparagine 25, asparagine 55, and asparagine 178 each carry an N-linked (GlcNAc...) asparagine glycan.

The protein belongs to the calycin superfamily. Triabin family. In terms of assembly, interacts with host coagulation factor XII (F12) (inactive and activated) (via amino acids 1-77). Interacts with host high molecular weight kininogen (KNG1) (via amino acids 402-532). In terms of tissue distribution, salivary gland (at protein level).

Its subcellular location is the secreted. Zn(2+) modulates binding to host coagulation factor XII (F12) and high molecular weight kininogen (KNG1). Suppresses activation of the host plasma kallikrein-kinin system, leading to inhibition of the intrinsic coagulation pathway. Blocks host coagulation factor XII (F12) and prekallikrein (KLKB1) reciprocal activation without affecting their amidolytic activities. Blocks binding of host F12 and high molecular weight kininogen (KNG1) to negatively charged surfaces. Attenuates generation of bradykinin by interfering with activation of host kallikrein-kinin system. The chain is Triafestin-2 from Triatoma infestans (Assassin bug).